We begin with the raw amino-acid sequence, 179 residues long: Probable galaptin lec-7 (179 aa).

One can recognise a Galectin domain in the interval 11-138 (SVYQIEENLK…SVDIESIVFK (128 aa)).

The protein is Probable galaptin lec-7 (lec-7) of Caenorhabditis elegans.